The following is a 322-amino-acid chain: uncharacterized protein (322 aa).

Positions 277–322 (LVTYGGKDGPSDNEDGPSDDEDGPSDDEEGLSKDGVSEYYQSDLDD) are disordered. Residues 287–305 (SDNEDGPSDDEDGPSDDEE) are compositionally biased toward acidic residues.

This is an uncharacterized protein from Frog virus 3 (isolate Goorha) (FV-3).